We begin with the raw amino-acid sequence, 120 residues long: NAD(P)H-quinone oxidoreductase subunit 3, chloroplastic (120 aa).

Transmembrane regions (helical) follow at residues 9 to 29 (IFWA…LISG), 64 to 84 (MFAL…PWAM), and 88 to 108 (VLGV…IVGS).

It belongs to the complex I subunit 3 family. In terms of assembly, NDH is composed of at least 16 different subunits, 5 of which are encoded in the nucleus.

The protein resides in the plastid. Its subcellular location is the chloroplast thylakoid membrane. It catalyses the reaction a plastoquinone + NADH + (n+1) H(+)(in) = a plastoquinol + NAD(+) + n H(+)(out). The catalysed reaction is a plastoquinone + NADPH + (n+1) H(+)(in) = a plastoquinol + NADP(+) + n H(+)(out). In terms of biological role, NDH shuttles electrons from NAD(P)H:plastoquinone, via FMN and iron-sulfur (Fe-S) centers, to quinones in the photosynthetic chain and possibly in a chloroplast respiratory chain. The immediate electron acceptor for the enzyme in this species is believed to be plastoquinone. Couples the redox reaction to proton translocation, and thus conserves the redox energy in a proton gradient. This Carica papaya (Papaya) protein is NAD(P)H-quinone oxidoreductase subunit 3, chloroplastic.